The chain runs to 571 residues: Proline--tRNA ligase (571 aa).

Belongs to the class-II aminoacyl-tRNA synthetase family. ProS type 1 subfamily. In terms of assembly, homodimer.

Its subcellular location is the cytoplasm. It carries out the reaction tRNA(Pro) + L-proline + ATP = L-prolyl-tRNA(Pro) + AMP + diphosphate. Catalyzes the attachment of proline to tRNA(Pro) in a two-step reaction: proline is first activated by ATP to form Pro-AMP and then transferred to the acceptor end of tRNA(Pro). As ProRS can inadvertently accommodate and process non-cognate amino acids such as alanine and cysteine, to avoid such errors it has two additional distinct editing activities against alanine. One activity is designated as 'pretransfer' editing and involves the tRNA(Pro)-independent hydrolysis of activated Ala-AMP. The other activity is designated 'posttransfer' editing and involves deacylation of mischarged Ala-tRNA(Pro). The misacylated Cys-tRNA(Pro) is not edited by ProRS. The polypeptide is Proline--tRNA ligase (Pediococcus pentosaceus (strain ATCC 25745 / CCUG 21536 / LMG 10740 / 183-1w)).